Here is a 331-residue protein sequence, read N- to C-terminus: Putative T-box protein 36 (331 aa).

A DNA-binding region (T-box) is located at residues 29-210 (EITKKQWNQL…MNRFSRKRKY (182 aa)).

Its subcellular location is the nucleus. In Caenorhabditis elegans, this protein is Putative T-box protein 36 (tbx-36).